Reading from the N-terminus, the 398-residue chain is Na(+)/H(+) antiporter NhaA (398 aa).

11 consecutive transmembrane segments (helical) span residues 14–34 (AAGV…NWSV), 60–80 (LLLW…GLEV), 96–116 (MLPL…FLLF), 125–145 (VGWA…LTLL), 155–175 (VFLL…IALF), 179–199 (QIFW…AYLN), 214–234 (IVLW…GVIV), 263–283 (FLII…GIVL), 292–312 (LGIA…LSWL), 330–350 (IVAV…ITLL), and 362–382 (YAKL…YLAL).

This sequence belongs to the NhaA Na(+)/H(+) (TC 2.A.33) antiporter family.

The protein resides in the cell inner membrane. The catalysed reaction is Na(+)(in) + 2 H(+)(out) = Na(+)(out) + 2 H(+)(in). Functionally, na(+)/H(+) antiporter that extrudes sodium in exchange for external protons. In Pectobacterium carotovorum subsp. carotovorum (strain PC1), this protein is Na(+)/H(+) antiporter NhaA.